Here is a 160-residue protein sequence, read N- to C-terminus: Endoribonuclease YbeY (160 aa).

Zn(2+) contacts are provided by His123, His127, and His133.

It belongs to the endoribonuclease YbeY family. Zn(2+) is required as a cofactor.

It localises to the cytoplasm. In terms of biological role, single strand-specific metallo-endoribonuclease involved in late-stage 70S ribosome quality control and in maturation of the 3' terminus of the 16S rRNA. The chain is Endoribonuclease YbeY from Roseiflexus sp. (strain RS-1).